The chain runs to 173 residues: Telomerase RNA component interacting RNase (173 aa).

Basic and acidic residues predominate over residues 1–12 (MAARGRRAEPPG). A disordered region spans residues 1–119 (MAARGRRAEP…LSFVGKRRGG (119 aa)). Composition is skewed to low complexity over residues 14 to 23 (EAPGPAGSGR) and 43 to 52 (SGSSPVSSGV). The span at 64 to 79 (LFKRKMEEEQRQRQEE) shows a compositional bias: basic and acidic residues. Over residues 80–90 (PPPGPQRPDPP) the composition is skewed to pro residues. N6-acetyllysine is present on Lys143.

As to quaternary structure, part of the telomerase RNA 3' end complex which contains about 488 proteins.

Exoribonuclease that is part of the telomerase RNA 3' end processing complex and which has the ability to cleave all four unpaired RNA nucleotides from the 5' end or 3' end with higher efficiency for purine bases. This chain is Telomerase RNA component interacting RNase, found in Mus musculus (Mouse).